The following is an 81-amino-acid chain: Defensin-like protein 43 (81 aa).

A signal peptide spans 1–27 (MGITKTSVTFLFLLILAAFVSNYNVLA). 4 disulfide bridges follow: cysteine 40-cysteine 79, cysteine 44-cysteine 67, cysteine 53-cysteine 77, and cysteine 57-cysteine 78.

Belongs to the DEFL family.

The protein localises to the secreted. The sequence is that of Defensin-like protein 43 from Arabidopsis thaliana (Mouse-ear cress).